The chain runs to 779 residues: Acyl-homoserine lactone acylase PvdQ (779 aa).

Positions 1–25 (MIISRPLCGFVFAGLSFAVILPAQA) are cleaved as a signal peptide. Residues 202 to 223 (SQQVQALQLAAVRNQRFALERG) constitute a propeptide, spacer peptide. S224 acts as the Nucleophile in catalysis. Residues 731–746 (ESSNPQSAHSSDQTEA) are compositionally biased toward polar residues. A disordered region spans residues 731-752 (ESSNPQSAHSSDQTEAFSKKQW).

This sequence belongs to the peptidase S45 family. As to quaternary structure, heterodimer of an alpha subunit and a beta subunit processed from the same precursor.

The protein localises to the periplasm. It catalyses the reaction an N-acyl-L-homoserine lactone + H2O = L-homoserine lactone + a carboxylate. Its function is as follows. Catalyzes the deacylation of acyl-homoserine lactone (AHL or acyl-HSL), releasing homoserine lactone (HSL) and the corresponding fatty acid. Possesses a specificity for the degradation of long-chain acyl-HSLs (side chains of 11 to 14 carbons in length). The sequence is that of Acyl-homoserine lactone acylase PvdQ (pvdQ) from Pseudomonas savastanoi pv. phaseolicola (strain 1448A / Race 6) (Pseudomonas syringae pv. phaseolicola (strain 1448A / Race 6)).